The sequence spans 223 residues: V-type ATP synthase subunit D (223 aa).

A disordered region spans residues 203-223 (AREAEEEGGRPNPQVEIGAGL).

Belongs to the V-ATPase D subunit family.

In terms of biological role, produces ATP from ADP in the presence of a proton gradient across the membrane. The polypeptide is V-type ATP synthase subunit D (Thermus thermophilus (strain ATCC BAA-163 / DSM 7039 / HB27)).